Consider the following 395-residue polypeptide: Membrane glycoprotein spo14 (395 aa).

At 1 to 346 (MAELHLSFPA…KLEDAGVILR (346 aa)) the chain is on the cytoplasmic side. WD repeat units follow at residues 250 to 285 (MIRD…RFMS) and 290 to 326 (KLSQ…CLQF). Residues 347–367 (LSLMFPFVLAILYFYLQLLFP) traverse the membrane as a helical; Signal-anchor for type II membrane protein segment. The Lumenal portion of the chain corresponds to 368–395 (DEKLDAIHRFFSFILHIFSKYTIRNYDL).

Its subcellular location is the endoplasmic reticulum membrane. It is found in the golgi apparatus. The protein resides in the cis-Golgi network membrane. In terms of biological role, required for the formation of transport vesicles from the ER. This function involves the cytoplasmic domain of the protein, which is thought to interact with the small GTP-binding protein sar1. The chain is Membrane glycoprotein spo14 (spo14) from Schizosaccharomyces pombe (strain 972 / ATCC 24843) (Fission yeast).